Consider the following 358-residue polypeptide: Phospho-N-acetylmuramoyl-pentapeptide-transferase (358 aa).

A run of 10 helical transmembrane segments spans residues 25–45, 73–93, 97–117, 134–154, 172–192, 197–217, 233–253, 261–281, 286–306, and 335–355; these read RTIY…PWVI, TMGG…WADL, YVWT…TDDY, MFWQ…VAGM, YLYI…VNLT, GLAI…AYIA, GAGE…GFLW, VFMG…LAVI, MLLV…IFQV, and KIIV…ISTL.

This sequence belongs to the glycosyltransferase 4 family. MraY subfamily. The cofactor is Mg(2+).

It localises to the cell inner membrane. It carries out the reaction UDP-N-acetyl-alpha-D-muramoyl-L-alanyl-gamma-D-glutamyl-meso-2,6-diaminopimeloyl-D-alanyl-D-alanine + di-trans,octa-cis-undecaprenyl phosphate = di-trans,octa-cis-undecaprenyl diphospho-N-acetyl-alpha-D-muramoyl-L-alanyl-D-glutamyl-meso-2,6-diaminopimeloyl-D-alanyl-D-alanine + UMP. It functions in the pathway cell wall biogenesis; peptidoglycan biosynthesis. Its function is as follows. Catalyzes the initial step of the lipid cycle reactions in the biosynthesis of the cell wall peptidoglycan: transfers peptidoglycan precursor phospho-MurNAc-pentapeptide from UDP-MurNAc-pentapeptide onto the lipid carrier undecaprenyl phosphate, yielding undecaprenyl-pyrophosphoryl-MurNAc-pentapeptide, known as lipid I. This Geobacter sulfurreducens (strain ATCC 51573 / DSM 12127 / PCA) protein is Phospho-N-acetylmuramoyl-pentapeptide-transferase.